Reading from the N-terminus, the 372-residue chain is F-box/kelch-repeat protein At5g48990 (372 aa).

The F-box domain maps to 14–60 (SSPNPSLPEDLIVSILARVSRSYYTNLSVVSKTFRSILTSPELYKTR). Residues 176–222 (RTYFPGSSEKPDSLNCVEVYNTNTQTWNPVPPQKRKLKFGNMEGKIY) form a Kelch repeat.

The chain is F-box/kelch-repeat protein At5g48990 from Arabidopsis thaliana (Mouse-ear cress).